The primary structure comprises 162 residues: V-type proton ATPase subunit c' (162 aa).

The Lumenal portion of the chain corresponds to 1–11 (MSSNLCPIYSS). A helical transmembrane segment spans residues 12–32 (FFGFAGVCASMVFSCLGAGYG). Residues 33–54 (TALAGRGIAAVGAFRPEIVMKS) lie on the Cytoplasmic side of the membrane. The chain crosses the membrane as a helical span at residues 55–75 (LIPVVMSGIIGVYGLVMSVLI). Residues 76 to 93 (AGDMSPDNDYSLFSGFIH) are Lumenal-facing. A helical transmembrane segment spans residues 94–114 (LSAGLAVGLTGVAAGYAIGVV). Topologically, residues 115–132 (GDRGVQSFMRQDRIFVSM) are cytoplasmic. A helical membrane pass occupies residues 133–153 (VLILIFAEVLGLYGLIVGLIL). Topologically, residues 154–162 (QTKTSNVCY) are lumenal.

The protein belongs to the V-ATPase proteolipid subunit family. V-ATPase is a heteromultimeric enzyme composed of a peripheral catalytic V1 complex (components A to H) attached to an integral membrane V0 proton pore complex (components: a, c, c', c'', d, e, f and VOA1). The decameric c-ring forms the proton-conducting pore, and is composed of eight proteolipid subunits c, one subunit c' and one subunit c''.

The protein resides in the vacuole membrane. Its function is as follows. Proton-conducting pore forming subunit of the V0 complex of vacuolar(H+)-ATPase (V-ATPase), a multisubunit enzyme composed of a peripheral complex (V1) that hydrolyzes ATP and a membrane integral complex (V0) that translocates protons. V-ATPase is responsible for acidifying and maintaining the pH of intracellular compartments. The chain is V-type proton ATPase subunit c' from Schizosaccharomyces pombe (strain 972 / ATCC 24843) (Fission yeast).